Reading from the N-terminus, the 383-residue chain is Insecticidal crystal protein Cry35Ab1 (383 aa).

Residues 26–138 (DDSGVSLMNK…NNPNQQWNLT (113 aa)) enclose the Ricin B-type lectin domain.

Belongs to the toxin_10 family. As to quaternary structure, monomer in solution. Copurifies from parasporal inclusion bodies with Cry34Ab1. In terms of processing, proteolytic processing occurs near the C-terminus yielding a stable protein of approximately 40 kDa; this may be the active form of the protein.

Component of a binary insecticidal toxin active on western corn rootworm (WCR, Diabrotica virgifera subsp. virgifera Le Conte) and probably also on northern corn rootworm (D.barberi). Both proteins are required for maximal toxicity. The larval midgut epithelium is probably the primary target. This protein alone has no activity against southern corn rootworm (Diabrotica undecimpunctata howardi Barber), but it synergizes the toxic effect of its Cry34Ab1 partner. The 2 proteins individually and together form ion channels; channels made in the presence of the 2 proteins have higher conductance. Binds to WCR third instar midgut brush border membrane vesicles; binding improves over 10-fold in the presence of Cry34Ab1. In Bacillus thuringiensis, this protein is Insecticidal crystal protein Cry35Ab1.